A 334-amino-acid polypeptide reads, in one-letter code: DGAT1/2-independent enzyme synthesizing storage lipids (334 aa).

The Lumenal segment spans residues 1-50 (MTNKNQSFGVGQDSMSSMTCLIHVLEAWFGVEHLEDYWNFANYLLWVFTP). An N-linked (GlcNAc...) asparagine glycan is attached at Asn5. Residues 51 to 71 (LLLLILPYFTIFLLYLTIIFL) traverse the membrane as a helical segment. Residues 72 to 125 (HIYKRKNVLKEAYSHNLWDGARKTVATLWDGHAAVWHGYEVHGMEKIPEEGPAL) are Cytoplasmic-facing. The chain crosses the membrane as a helical span at residues 126-146 (IIFYHGAIPIDFYYFMAKIFI). The active site involves His130. Residues 147 to 334 (HKGRTCRVVA…NKQKINQKTL (188 aa)) are Lumenal-facing.

It belongs to the diacylglycerol acyltransferase family. Highly divergent.

Its subcellular location is the endoplasmic reticulum membrane. The catalysed reaction is a 1,2-diacylglycerol + a 1,2-diacyl-sn-glycero-3-phosphocholine = a triacylglycerol + a 1-acyl-sn-glycero-3-phosphocholine. It catalyses the reaction a 1-O-alkyl-2-acyl-sn-glycero-3-phosphocholine + a 1,2-diacylglycerol = a 1-O-alkyl-sn-glycero-3-phosphocholine + a triacylglycerol. It carries out the reaction a 2-acylglycerol + an acyl-CoA = a 1,2-diacylglycerol + CoA. The enzyme catalyses an acyl-CoA + a 1,2-diacyl-sn-glycerol = a triacyl-sn-glycerol + CoA. The catalysed reaction is 2-(9Z-octadecenoyl)-glycerol + (9Z)-octadecenoyl-CoA = 1,2-di-(9Z-octadecenoyl)-glycerol + CoA. It catalyses the reaction 1,2-di-(9Z-octadecenoyl)-sn-glycerol + (9Z)-octadecenoyl-CoA = 1,2,3-tri-(9Z-octadecenoyl)-glycerol + CoA. Acyltransferase activity is specifically inhibited by TMX1 at the endoplasmic reticulum, restricting accumulation of triacylglycerol. Its function is as follows. Catalytic subunit of the alternative triglyceride biosynthesis pathway, which mediates formation of triacylglycerol from diacylglycerol and membrane phospholipids. Synthesizes triacylglycerol at the expense of membrane phospholipids, such as phosphatidylcholine (PC) and its ether-linked form (ePC), thereby altering the composition of membranes. The alternative triglyceride biosynthesis pathway is probably required to provide the energy required for rapid growth when fuel sources are limiting. It maintains mitochondrial function during periods of extracellular lipid starvation. Can also use acyl-CoA as donor: acts as a acyl-CoA:monoacylglycerol acyltransferase (MGAT), but also shows acyl-CoA:diacylglycerol acyltransferase (DGAT) activity. In Bos taurus (Bovine), this protein is DGAT1/2-independent enzyme synthesizing storage lipids (TMEM68).